The following is a 332-amino-acid chain: 2-hydroxyacid dehydrogenase homolog 1 (332 aa).

NAD(+) contacts are provided by residues 154-155 (RI), 233-235 (TSR), and D259. Residue R235 is part of the active site. E264 is a catalytic residue. H296 functions as the Proton donor in the catalytic mechanism. Residue 296–299 (HQAF) participates in NAD(+) binding.

The protein belongs to the D-isomer specific 2-hydroxyacid dehydrogenase family.

The protein resides in the cytoplasm. Its subcellular location is the nucleus. This Schizosaccharomyces pombe (strain 972 / ATCC 24843) (Fission yeast) protein is 2-hydroxyacid dehydrogenase homolog 1.